The chain runs to 237 residues: 3-oxoacyl-[acyl-carrier-protein] reductase (237 aa).

Met-1 carries the post-translational modification N-acetylmethionine. NADP(+)-binding positions include 11 to 14 (SRGI), 34 to 35 (RN), Asp-56, and 83 to 85 (AAG). Ser-135 provides a ligand contact to substrate. Residues Tyr-148, Lys-152, and 181 to 183 (IHT) contribute to the NADP(+) site. Tyr-148 acts as the Proton acceptor in catalysis. Lys-195 carries the N6-acetyllysine modification.

Belongs to the short-chain dehydrogenases/reductases (SDR) family. As to quaternary structure, homotetramer (in vitro). Heterotetramer with HSD17B8; contains two molecules each of HSD17B8 and CBR4. Does not form homotetramers when HSD17B8 is coexpressed, only heterotetramers (in vitro).

Its subcellular location is the mitochondrion matrix. It catalyses the reaction a (3R)-hydroxyacyl-[ACP] + NADP(+) = a 3-oxoacyl-[ACP] + NADPH + H(+). The catalysed reaction is a quinone + NADPH + H(+) = a quinol + NADP(+). Its pathway is lipid metabolism; fatty acid biosynthesis. Functionally, component of the heterotetramer complex KAR (3-ketoacyl-[acyl carrier protein] reductase or 3-ketoacyl-[ACP] reductase) that forms part of the mitochondrial fatty acid synthase (mtFAS). Beta-subunit of the KAR heterotetramer complex, responsible for the 3-ketoacyl-ACP reductase activity of the mtFAS, reduces 3-oxoacyl-[ACP] to (3R)-hydroxyacyl-[ACP] in a NADPH-dependent manner with no chain length preference, thereby participating in mitochondrial fatty acid biosynthesis. The homotetramer has NADPH-dependent quinone reductase activity (in vitro), hence could play a role in protection against cytotoxicity of exogenous quinones. As a heterotetramer, it can also reduce 9,10-phenanthrenequinone, 1,4-benzoquinone and various other o-quinones and p-quinones (in vitro). In Bos taurus (Bovine), this protein is 3-oxoacyl-[acyl-carrier-protein] reductase (CBR4).